The sequence spans 149 residues: UPF0178 protein Psyc_0274 (149 aa).

Belongs to the UPF0178 family.

The polypeptide is UPF0178 protein Psyc_0274 (Psychrobacter arcticus (strain DSM 17307 / VKM B-2377 / 273-4)).